The following is a 172-amino-acid chain: Putative F-box protein At3g13825 (172 aa).

The F-box domain maps to 1-51; the sequence is MTTLSNLSVDLVGEIFSRVPLISLSEVRCTCTTWNTLSWNILSENYVFGKA.

The protein is Putative F-box protein At3g13825 of Arabidopsis thaliana (Mouse-ear cress).